The chain runs to 281 residues: MQKKYYELFFIVEERYKNLFLDFAFDLGIEAIEEKDNGVYIRSHESLEDLSWALEIFAQKLTTTFNLNHKIISNLSLVEKENKDWIQEYKKGIKPILVDNVYIHTTWQEEKKNCINIKINPALAFGSGHHESTYSCVKFLQKFSKSKLRALDLGCGSGILGIIMAKFGCNVEICDTDELAIDSSLENARLNGVDFYKAWCGSIDKANGLYNLIVANIIADVILILEKDIKNHLEDNAILILSGILDKYSTRIKEKFQDLELIDEMQINEWCSFVYKNNKKG.

4 residues coordinate S-adenosyl-L-methionine: T133, G154, D175, and N216.

It belongs to the methyltransferase superfamily. PrmA family.

The protein localises to the cytoplasm. It carries out the reaction L-lysyl-[protein] + 3 S-adenosyl-L-methionine = N(6),N(6),N(6)-trimethyl-L-lysyl-[protein] + 3 S-adenosyl-L-homocysteine + 3 H(+). Functionally, methylates ribosomal protein L11. The polypeptide is Ribosomal protein L11 methyltransferase (Campylobacter jejuni subsp. jejuni serotype O:23/36 (strain 81-176)).